The sequence spans 351 residues: 3-hydroxy-4-methyl-anthranilyl-[aryl-carrier protein] 5-monooxygenase (351 aa).

This sequence belongs to the aromatic-ring hydroxylase family. FAD serves as cofactor.

It carries out the reaction 3-hydroxy-4-methylanthranilyl-[aryl-carrier protein] + NADH + O2 + H(+) = 3,5-dihydroxy-4-methylanthranilyl-[aryl-carrier protein] + NAD(+) + H2O. Its pathway is antibiotic biosynthesis. Functionally, involved in the biosynthesis of the antitumor antibiotic sibiromycin. Hydroxylates the C5 position of the peptidyl carrier protein (PCP)-bound 4-methyl-3-hydroxyanthranilic acid (4-MHA or 3H4MAA), leading to the formation of the fully substituted anthranilate moiety found in sibiromycin. The polypeptide is 3-hydroxy-4-methyl-anthranilyl-[aryl-carrier protein] 5-monooxygenase (Streptosporangium sibiricum).